A 364-amino-acid chain; its full sequence is Aminomethyltransferase (364 aa).

This sequence belongs to the GcvT family. The glycine cleavage system is composed of four proteins: P, T, L and H.

The catalysed reaction is N(6)-[(R)-S(8)-aminomethyldihydrolipoyl]-L-lysyl-[protein] + (6S)-5,6,7,8-tetrahydrofolate = N(6)-[(R)-dihydrolipoyl]-L-lysyl-[protein] + (6R)-5,10-methylene-5,6,7,8-tetrahydrofolate + NH4(+). Its function is as follows. The glycine cleavage system catalyzes the degradation of glycine. The polypeptide is Aminomethyltransferase (Shigella boydii serotype 18 (strain CDC 3083-94 / BS512)).